A 29-amino-acid chain; its full sequence is Potassium channel toxin alpha-KTx 8.3 (29 aa).

Disulfide bonds link Cys3-Cys19, Cys6-Cys24, and Cys10-Cys26.

The protein belongs to the short scorpion toxin superfamily. Potassium channel inhibitor family. Alpha-KTx 08 subfamily. In terms of tissue distribution, expressed by the venom gland.

The protein resides in the secreted. Functionally, specific and potent inhibitor of ClC-2/CLCN2 chloride channel. It slows ClC-2/CLCN2 activation by increasing the latency to first opening by nearly 8-fold but is unable to inhibit open channels, suggesting that this toxin inhibits channel activation gating. The sequence is that of Potassium channel toxin alpha-KTx 8.3 from Leiurus hebraeus (Hebrew deathstalker scorpion).